We begin with the raw amino-acid sequence, 1097 residues long: Protease Do-like 7 (1097 aa).

The interval 55–243 (VLRTTACRAF…LPLQRVVRAL (189 aa)) is serine protease. Residues 269 to 366 (MTFLHKGFDE…RGGQPLSVSV (98 aa)) form the PDZ domain. Residue histidine 524 is the Charge relay system of the active site. Residues 546–556 (TSSGDGSQNDF) show a composition bias toward polar residues. A disordered region spans residues 546 to 577 (TSSGDGSQNDFGSEAKKQRVDEDSSDGIAANG). Residues 558 to 567 (SEAKKQRVDE) are compositionally biased toward basic and acidic residues. The active-site Charge relay system is serine 785.

The protein belongs to the peptidase S1C family.

It localises to the cytoplasm. Its function is as follows. Probable serine protease. The chain is Protease Do-like 7 (DEGP7) from Arabidopsis thaliana (Mouse-ear cress).